Here is a 108-residue protein sequence, read N- to C-terminus: UPF0060 membrane protein Mvan_3406 (108 aa).

The next 4 helical transmembrane spans lie at 7-27 (LLFV…WQGV), 32-52 (GLTW…VAAF), 61-81 (VLAA…VVAD), and 87-107 (RWDI…MYAP).

It belongs to the UPF0060 family.

The protein localises to the cell membrane. The protein is UPF0060 membrane protein Mvan_3406 of Mycolicibacterium vanbaalenii (strain DSM 7251 / JCM 13017 / BCRC 16820 / KCTC 9966 / NRRL B-24157 / PYR-1) (Mycobacterium vanbaalenii).